The sequence spans 150 residues: Transmembrane protein PMIS2 (150 aa).

Residues 1–12 (MALKPPSATQPA) are compositionally biased toward low complexity. Residues 1–61 (MALKPPSATQ…EPQEPTQTPE (61 aa)) form a disordered region. Over residues 13 to 22 (PNAPATPDAP) the composition is skewed to pro residues. The span at 23–61 (PTTGDPGASAAPGSPTTTGGPGAPAEVPQEPQEPTQTPE) shows a compositional bias: low complexity. Helical transmembrane passes span 71 to 91 (LCLT…ALYF) and 130 to 150 (GWFG…LVLY).

The protein belongs to the CD225/Dispanin family.

The protein localises to the membrane. In terms of biological role, may play a role in spermatozoa mobility. The sequence is that of Transmembrane protein PMIS2 from Homo sapiens (Human).